Here is a 150-residue protein sequence, read N- to C-terminus: Avidin-related protein 2 (150 aa).

The first 24 residues, 1-24 (MVHATSPLLLLLLLSLALVAPSLS), serve as a signal peptide directing secretion. The Avidin-like domain maps to 26–147 (RKCSLTGEWD…GNNDFTRQHT (122 aa)). Residues Cys-28 and Cys-105 are joined by a disulfide bond. Residues Asn-36, Ser-40, Tyr-57, Thr-59, and Asp-63 each contribute to the biotin site. 2 N-linked (GlcNAc...) asparagine glycosylation sites follow: Asn-67 and Asn-93. Ser-95, Ser-99, and Asn-140 together coordinate biotin.

In terms of assembly, homotetramer. In terms of processing, glycosylated.

The protein resides in the secreted. Functionally, forms a strong non-covalent specific complex with biotin. This Gallus gallus (Chicken) protein is Avidin-related protein 2 (AVR2).